A 326-amino-acid chain; its full sequence is GTP 3',8-cyclase (326 aa).

One can recognise a Radical SAM core domain in the interval 5–227 (GHGRTVDYLR…ALGREGASPS (223 aa)). GTP is bound at residue Arg-14. [4Fe-4S] cluster contacts are provided by Cys-21 and Cys-25. Tyr-27 lines the S-adenosyl-L-methionine pocket. Cys-28 provides a ligand contact to [4Fe-4S] cluster. Residue Arg-64 participates in GTP binding. S-adenosyl-L-methionine is bound at residue Gly-68. Thr-95 lines the GTP pocket. Position 119 (Ser-119) interacts with S-adenosyl-L-methionine. Lys-155 is a binding site for GTP. Position 189 (Met-189) interacts with S-adenosyl-L-methionine. 2 residues coordinate [4Fe-4S] cluster: Cys-250 and Cys-253. GTP is bound at residue 255-257 (RIR). Cys-267 provides a ligand contact to [4Fe-4S] cluster.

This sequence belongs to the radical SAM superfamily. MoaA family. In terms of assembly, monomer and homodimer. The cofactor is [4Fe-4S] cluster.

It catalyses the reaction GTP + AH2 + S-adenosyl-L-methionine = (8S)-3',8-cyclo-7,8-dihydroguanosine 5'-triphosphate + 5'-deoxyadenosine + L-methionine + A + H(+). It participates in cofactor biosynthesis; molybdopterin biosynthesis. Its function is as follows. Catalyzes the cyclization of GTP to (8S)-3',8-cyclo-7,8-dihydroguanosine 5'-triphosphate. The polypeptide is GTP 3',8-cyclase (Sulfurovum sp. (strain NBC37-1)).